A 581-amino-acid chain; its full sequence is Serine/threonine protein phosphatase 2A 55 kDa regulatory subunit B alpha isoform (581 aa).

The interval 1-27 is disordered; it reads MMNPDGGDGDRLEAAGAGSSSAQQGHP. Over residues 14–25 the composition is skewed to low complexity; that stretch reads AAGAGSSSAQQG. WD repeat units lie at residues 47–86 and 123–164; these read QEVD…DNAS and EIEE…VKQV. Residues 172 to 189 show a composition bias toward low complexity; sequence RSVGTGTSSSASTSSSRG. Residues 172-192 form a disordered region; the sequence is RSVGTGTSSSASTSSSRGLLP. WD repeat units lie at residues 241-279, 290-330, 349-387, and 492-530; these read AHDY…QSFN, DLTE…LCDN, EIIA…GPVS, and DFST…RKFI.

It belongs to the phosphatase 2A regulatory subunit B family. As to quaternary structure, PP2A consists of a common heteromeric enzyme, composed of a catalytic subunit (subunits C), a constant regulatory subunit (subunit A), and a variety of regulatory subunits such as subunits B (the R2/B/PR55/B55, R3/B''/PR72/PR130/PR59 and R5/B'/B56 families).

Functionally, the B regulatory subunit may modulate substrate selectivity and catalytic activity, and may also direct the localization of the catalytic enzyme to a particular subcellular compartment. This is Serine/threonine protein phosphatase 2A 55 kDa regulatory subunit B alpha isoform from Oryza sativa subsp. japonica (Rice).